The following is a 383-amino-acid chain: MVHITLPGLLLCLCLYLSVAPANPLNAHARVSDTTAFPLPNEGHVVAHDPSIVRHHEHFYLFKGGIHIPVFRASNLSGPWERLGTVLNGPSLVQKQNQRRPWAPMVTQWKNRFYCFYSISQNGKRNSAIGVASSDSVEPGGWTDHGPLINTGHGPGSGVYPFNVSNAIDPAFFADPITGQPYLQYGSYWKGIFQVPLAEDLLSVENATHPNTDHLVFLPKKKPKPNEGVFMSYRAPYYYAWFSHGQCCHFKTQGFPKEGNEYSIRVGRSTSVHGPFVDRDNKDLLNGGGSVVYGSNHGKVYAPGGLGVLPGANGEPDVLYYHYHNASIGFAQGDARLGWNYLDYVDGWPVPRAPSNPGNSLQPPSSVSLQIVAFLCLVILFTL.

The first 22 residues, 1–22 (MVHITLPGLLLCLCLYLSVAPA), serve as a signal peptide directing secretion. The Proton acceptor role is filled by D49. N-linked (GlcNAc...) asparagine glycans are attached at residues N75, N163, and N206. The active-site Proton donor is E227. A glycan (N-linked (GlcNAc...) asparagine) is linked at N325. N356 carries GPI-anchor amidated asparagine lipidation. A propeptide spans 357–383 (PGNSLQPPSSVSLQIVAFLCLVILFTL) (removed in mature form).

It belongs to the glycosyl hydrolase 43 family.

The protein localises to the cell membrane. The enzyme catalyses Endohydrolysis of (1-&gt;5)-alpha-arabinofuranosidic linkages in (1-&gt;5)-arabinans.. It functions in the pathway glycan metabolism; L-arabinan degradation. Its function is as follows. Endo-1,5-alpha-L-arabinanase involved in degradation of pectin. Its preferred substrate is linear 1,5-alpha-L-arabinan. This chain is Probable arabinan endo-1,5-alpha-L-arabinosidase D (abnD), found in Emericella nidulans (strain FGSC A4 / ATCC 38163 / CBS 112.46 / NRRL 194 / M139) (Aspergillus nidulans).